The primary structure comprises 47 residues: uncharacterized protein (47 aa).

One can recognise an ATP-cone domain in the interval 2-47 (LRVRKRDGRLEEFSRAKIVRTCLRAGASKKIAEKVAEELKRGYTMG).

This is an uncharacterized protein from Archaeoglobus fulgidus (strain ATCC 49558 / DSM 4304 / JCM 9628 / NBRC 100126 / VC-16).